The following is a 166-amino-acid chain: 2-C-methyl-D-erythritol 2,4-cyclodiphosphate synthase (166 aa).

A divalent metal cation contacts are provided by aspartate 12 and histidine 14. 4-CDP-2-C-methyl-D-erythritol 2-phosphate contacts are provided by residues 12-14 and 38-39; these read DSH and HS. Histidine 46 is a binding site for a divalent metal cation. Residues 60–62, 65–69, and arginine 146 contribute to the 4-CDP-2-C-methyl-D-erythritol 2-phosphate site; these read DIG and FPDTD.

This sequence belongs to the IspF family. In terms of assembly, homotrimer. It depends on a divalent metal cation as a cofactor.

It catalyses the reaction 4-CDP-2-C-methyl-D-erythritol 2-phosphate = 2-C-methyl-D-erythritol 2,4-cyclic diphosphate + CMP. Its pathway is isoprenoid biosynthesis; isopentenyl diphosphate biosynthesis via DXP pathway; isopentenyl diphosphate from 1-deoxy-D-xylulose 5-phosphate: step 4/6. In terms of biological role, involved in the biosynthesis of isopentenyl diphosphate (IPP) and dimethylallyl diphosphate (DMAPP), two major building blocks of isoprenoid compounds. Catalyzes the conversion of 4-diphosphocytidyl-2-C-methyl-D-erythritol 2-phosphate (CDP-ME2P) to 2-C-methyl-D-erythritol 2,4-cyclodiphosphate (ME-CPP) with a corresponding release of cytidine 5-monophosphate (CMP). In Gemmatimonas aurantiaca (strain DSM 14586 / JCM 11422 / NBRC 100505 / T-27), this protein is 2-C-methyl-D-erythritol 2,4-cyclodiphosphate synthase.